A 275-amino-acid polypeptide reads, in one-letter code: 3-methyl-2-oxobutanoate hydroxymethyltransferase (275 aa).

Mg(2+) is bound by residues Asp-49 and Asp-88. 3-methyl-2-oxobutanoate is bound by residues 49-50, Asp-88, and Lys-118; that span reads DS. Glu-120 contributes to the Mg(2+) binding site. The Proton acceptor role is filled by Glu-187.

This sequence belongs to the PanB family. As to quaternary structure, homodecamer; pentamer of dimers. Mg(2+) is required as a cofactor.

Its subcellular location is the cytoplasm. It carries out the reaction 3-methyl-2-oxobutanoate + (6R)-5,10-methylene-5,6,7,8-tetrahydrofolate + H2O = 2-dehydropantoate + (6S)-5,6,7,8-tetrahydrofolate. Its pathway is cofactor biosynthesis; (R)-pantothenate biosynthesis; (R)-pantoate from 3-methyl-2-oxobutanoate: step 1/2. Catalyzes the reversible reaction in which hydroxymethyl group from 5,10-methylenetetrahydrofolate is transferred onto alpha-ketoisovalerate to form ketopantoate. The sequence is that of 3-methyl-2-oxobutanoate hydroxymethyltransferase from Brucella melitensis biotype 1 (strain ATCC 23456 / CCUG 17765 / NCTC 10094 / 16M).